A 726-amino-acid chain; its full sequence is Catalase-peroxidase (726 aa).

The disordered stretch occupies residues 1-33 (MSTSDDIHNTTATGKCPFHQGGHDQSAGAGTTT). The tryptophyl-tyrosyl-methioninium (Trp-Tyr) (with M-252) cross-link spans 105–226 (WHGAGTYRSI…LGATEMGLIY (122 aa)). H106 acts as the Proton acceptor in catalysis. The segment at residues 226–252 (YVNPEGPDHSGEPLSAAAAIRATFGNM) is a cross-link (tryptophyl-tyrosyl-methioninium (Tyr-Met) (with W-105)). Position 267 (H267) interacts with heme b.

It belongs to the peroxidase family. Peroxidase/catalase subfamily. Homodimer or homotetramer. It depends on heme b as a cofactor. In terms of processing, formation of the three residue Trp-Tyr-Met cross-link is important for the catalase, but not the peroxidase activity of the enzyme.

It catalyses the reaction H2O2 + AH2 = A + 2 H2O. The enzyme catalyses 2 H2O2 = O2 + 2 H2O. Functionally, bifunctional enzyme with both catalase and broad-spectrum peroxidase activity. The chain is Catalase-peroxidase from Shigella boydii serotype 18 (strain CDC 3083-94 / BS512).